The following is a 2199-amino-acid chain: DNA polymerase epsilon catalytic subunit A (2199 aa).

Zn(2+)-binding residues include Cys-2069, Cys-2072, Cys-2104, and Cys-2107. A CysA-type zinc finger spans residues Cys-2069–Cys-2107. The [4Fe-4S] cluster site is built by Cys-2138, Cys-2141, Cys-2153, and Cys-2155. A CysB motif motif is present at residues Cys-2138 to Cys-2155.

It belongs to the DNA polymerase type-B family. As to quaternary structure, heterotetramer. Consists of 4 subunits: pol2, dpb2, dpb3 and dpb4. The cofactor is [4Fe-4S] cluster.

It is found in the nucleus. It catalyses the reaction DNA(n) + a 2'-deoxyribonucleoside 5'-triphosphate = DNA(n+1) + diphosphate. In terms of biological role, DNA polymerase II participates in chromosomal DNA replication. This Schizosaccharomyces pombe (strain 972 / ATCC 24843) (Fission yeast) protein is DNA polymerase epsilon catalytic subunit A (pol2).